The chain runs to 27 residues: NLLQFGFMIRCANKRRRPVWPYEESGC.

Belongs to the phospholipase A2 family. Group I subfamily. Heterotrimer of alpha, beta and gamma chains, each related to PLA2. Requires Ca(2+) as cofactor. As to expression, expressed by the venom gland.

It is found in the secreted. It carries out the reaction a 1,2-diacyl-sn-glycero-3-phosphocholine + H2O = a 1-acyl-sn-glycero-3-phosphocholine + a fatty acid + H(+). Heterotrimer: presynaptic neurotoxin. Inhibits nerve-evoked twitch contractions but not responses to cholinergic agonists acetylcholine and carbachol and to depolarizing agonist KCl. Causes a fade in tetanic contractions. Displays a triphasic mode of action with depression, enhancement and blockade of neurotransmission. Does not display myotoxic activity such as changes in baseline muscle tension or inhibition of directly stimulated muscle twitches. All subunits are necessary for maximum toxicity. Its function is as follows. Monomer: Snake venom phospholipase A2 (PLA2) alpha chain that has enzymatic activity. PLA2 catalyzes the calcium-dependent hydrolysis of the 2-acyl groups in 3-sn-phosphoglycerides. This is Phospholipase A2 P-elapitoxin-Aa1a alpha chain from Acanthophis antarcticus (Common death adder).